Reading from the N-terminus, the 193-residue chain is Probable DNA-directed RNA polymerase subunit delta (193 aa).

The 68-residue stretch at 14–81 (LALVEIATAI…GNNEWGLRAW (68 aa)) folds into the HTH HARE-type domain. 2 stretches are compositionally biased toward acidic residues: residues 119–174 (DDDV…DDNL) and 182–193 (DLDDLSDGDIEK). Residues 119–193 (DDDVIDYNDD…DDLSDGDIEK (75 aa)) are disordered.

This sequence belongs to the RpoE family. RNAP is composed of a core of 2 alpha, a beta and a beta' subunits. The core is associated with a delta subunit and one of several sigma factors.

In terms of biological role, participates in both the initiation and recycling phases of transcription. In the presence of the delta subunit, RNAP displays an increased specificity of transcription, a decreased affinity for nucleic acids, and an increased efficiency of RNA synthesis because of enhanced recycling. This Leuconostoc citreum (strain KM20) protein is Probable DNA-directed RNA polymerase subunit delta.